Here is a 421-residue protein sequence, read N- to C-terminus: Imidazolonepropionase (421 aa).

Fe(3+) is bound by residues histidine 81 and histidine 83. Zn(2+)-binding residues include histidine 81 and histidine 83. Residues arginine 90, tyrosine 153, and histidine 186 each contribute to the 4-imidazolone-5-propanoate site. Tyrosine 153 lines the N-formimidoyl-L-glutamate pocket. Histidine 251 contacts Fe(3+). Histidine 251 is a Zn(2+) binding site. Glutamate 254 is a 4-imidazolone-5-propanoate binding site. Position 326 (aspartate 326) interacts with Fe(3+). Aspartate 326 contacts Zn(2+). Positions 328 and 330 each coordinate N-formimidoyl-L-glutamate. Serine 331 serves as a coordination point for 4-imidazolone-5-propanoate.

Belongs to the metallo-dependent hydrolases superfamily. HutI family. Requires Zn(2+) as cofactor. The cofactor is Fe(3+).

The protein localises to the cytoplasm. The enzyme catalyses 4-imidazolone-5-propanoate + H2O = N-formimidoyl-L-glutamate. The protein operates within amino-acid degradation; L-histidine degradation into L-glutamate; N-formimidoyl-L-glutamate from L-histidine: step 3/3. Its function is as follows. Catalyzes the hydrolytic cleavage of the carbon-nitrogen bond in imidazolone-5-propanoate to yield N-formimidoyl-L-glutamate. It is the third step in the universal histidine degradation pathway. This Streptococcus gordonii (strain Challis / ATCC 35105 / BCRC 15272 / CH1 / DL1 / V288) protein is Imidazolonepropionase.